The chain runs to 325 residues: Collagen alpha-1(IX) chain (325 aa).

Low complexity predominate over residues Pro1–Leu54. 2 disordered regions span residues Pro1–Asp163 and Arg187–Lys325. Residues Arg198–Pro208 are compositionally biased toward pro residues. Residues Pro237–Pro249 show a composition bias toward basic and acidic residues. The span at Val292–Phe304 shows a compositional bias: pro residues.

The protein belongs to the fibril-associated collagens with interrupted helices (FACIT) family. As to quaternary structure, heterotrimer of an alpha 1(IX), an alpha 2(IX) and an alpha 3(IX) chain. Post-translationally, covalently linked to the telopeptides of type II collagen by lysine-derived cross-links. In terms of processing, prolines at the third position of the tripeptide repeating unit (G-X-Y) are hydroxylated in some or all of the chains.

It localises to the secreted. Its subcellular location is the extracellular space. It is found in the extracellular matrix. Functionally, structural component of hyaline cartilage and vitreous of the eye. The chain is Collagen alpha-1(IX) chain (Col9a1) from Rattus norvegicus (Rat).